The chain runs to 321 residues: Protein ZAR1-like (321 aa).

The segment at 110–214 is disordered; the sequence is RTLSSCSPWD…GDAASEPLRR (105 aa). Residues 145–154 are compositionally biased toward basic and acidic residues; sequence LRRDGDEAES. A 3CxxC-type zinc finger spans residues 222 to 307; that stretch reads PKYGYFHCKD…QELCGRCKDK (86 aa).

This sequence belongs to the ZAR1 family. In terms of assembly, interacts with YBX2.

The protein resides in the cytoplasm. The protein localises to the cytoplasmic ribonucleoprotein granule. Its function is as follows. mRNA-binding protein required for maternal mRNA storage, translation and degradation during oocyte maturation. Probably promotes formation of some phase-separated membraneless compartment that stores maternal mRNAs in oocytes: acts by undergoing liquid-liquid phase separation upon binding to maternal mRNAs. Binds to the 3'-UTR of maternal mRNAs, inhibiting their translation. This chain is Protein ZAR1-like, found in Homo sapiens (Human).